A 374-amino-acid chain; its full sequence is Flagellar P-ring protein (374 aa).

Positions 1–29 (MSGLGFTGVVRIAVMALLALAFLGAPAHA) are cleaved as a signal peptide. Residues 296 to 311 (ESPQVSQPNPLSNGRT) are compositionally biased toward polar residues. The interval 296–316 (ESPQVSQPNPLSNGRTVMTPR) is disordered.

This sequence belongs to the FlgI family. In terms of assembly, the basal body constitutes a major portion of the flagellar organelle and consists of four rings (L,P,S, and M) mounted on a central rod.

It localises to the periplasm. It is found in the bacterial flagellum basal body. Functionally, assembles around the rod to form the L-ring and probably protects the motor/basal body from shearing forces during rotation. This is Flagellar P-ring protein from Nitrobacter winogradskyi (strain ATCC 25391 / DSM 10237 / CIP 104748 / NCIMB 11846 / Nb-255).